A 255-amino-acid polypeptide reads, in one-letter code: 4-hydroxy-tetrahydrodipicolinate reductase (255 aa).

NAD(+) contacts are provided by residues 9-14, 89-91, and 115-118; these read GFKGRM, GTT, and APNF. The active-site Proton donor/acceptor is the His145. His146 lines the (S)-2,3,4,5-tetrahydrodipicolinate pocket. Lys149 (proton donor) is an active-site residue. Residue 155–156 coordinates (S)-2,3,4,5-tetrahydrodipicolinate; it reads GT.

It belongs to the DapB family.

Its subcellular location is the cytoplasm. It catalyses the reaction (S)-2,3,4,5-tetrahydrodipicolinate + NAD(+) + H2O = (2S,4S)-4-hydroxy-2,3,4,5-tetrahydrodipicolinate + NADH + H(+). The enzyme catalyses (S)-2,3,4,5-tetrahydrodipicolinate + NADP(+) + H2O = (2S,4S)-4-hydroxy-2,3,4,5-tetrahydrodipicolinate + NADPH + H(+). Its pathway is amino-acid biosynthesis; L-lysine biosynthesis via DAP pathway; (S)-tetrahydrodipicolinate from L-aspartate: step 4/4. Catalyzes the conversion of 4-hydroxy-tetrahydrodipicolinate (HTPA) to tetrahydrodipicolinate. The polypeptide is 4-hydroxy-tetrahydrodipicolinate reductase (Streptococcus mutans serotype c (strain ATCC 700610 / UA159)).